The following is a 240-amino-acid chain: Citrate synthase-lysine N-methyltransferase CSKMT, mitochondrial (240 aa).

The N-terminal 21 residues, 1–21 (MAALRRMLHLPRLTMGTCRPF), are a transit peptide targeting the mitochondrion.

Belongs to the methyltransferase superfamily.

The protein resides in the mitochondrion. It carries out the reaction L-lysyl-[citrate synthase] + S-adenosyl-L-methionine = N(6)-methyl-L-lysyl-[citrate synthase] + S-adenosyl-L-homocysteine + H(+). The catalysed reaction is N(6)-methyl-L-lysyl-[citrate synthase] + S-adenosyl-L-methionine = N(6),N(6)-dimethyl-L-lysyl-[citrate synthase] + S-adenosyl-L-homocysteine + H(+). It catalyses the reaction N(6),N(6)-dimethyl-L-lysyl-[citrate synthase] + S-adenosyl-L-methionine = N(6),N(6),N(6)-trimethyl-L-lysyl-[citrate synthase] + S-adenosyl-L-homocysteine + H(+). Citrate synthase-lysine methyltransferase activity is inhibited by S-adenosylhomocysteine (AdoHcy) and oxaloacetate (OAA). Functionally, protein-lysine methyltransferase that selectively trimethylates citrate synthase (CS) in mitochondria. Seems to conduct trimethylation in a highly distributive manner rather than in a processive manner, and thus introduces a single methyl group per binding event. This chain is Citrate synthase-lysine N-methyltransferase CSKMT, mitochondrial, found in Pongo abelii (Sumatran orangutan).